The primary structure comprises 251 residues: Derlin-1 (251 aa).

Ser2 is modified (N-acetylserine). Residues 2 to 15 (SDIGDWFRSIPAIT) lie on the Cytoplasmic side of the membrane. The chain crosses the membrane as a helical span at residues 16–31 (RYWFAATVAVPLVGKL). At 32–69 (GLISPAYLFLWPEAFLYRFQIWRPITATFYFPVGPGTG) the chain is on the lumenal side. The helical transmembrane segment at 70–89 (FLYLVNLYFLYHYSTRLETG) threads the bilayer. Residues 90–94 (AFDGR) are Cytoplasmic-facing. Residues 95–115 (PADYLFMLLFNWICIVITGLA) form a helical membrane-spanning segment. Over 116–122 (MDMQLLM) the chain is Lumenal. A helical membrane pass occupies residues 123–137 (IPLIMSVLYVWAQLN). At 138–154 (RDMIVSFWFGTRFKACY) the chain is on the cytoplasmic side. Residues 155–166 (LPWVILGFNYII) traverse the membrane as a helical segment. The Lumenal portion of the chain corresponds to 167-170 (GGSV). The chain crosses the membrane as a helical span at residues 171–189 (INELIGNLVGHLYFFLMFR). The Cytoplasmic segment spans residues 190-251 (YPMDLGGRNF…WGQGFRLGDQ (62 aa)). Position 201 is a phosphoserine (Ser201). Thr202 carries the post-translational modification Phosphothreonine. Ser226 is subject to Phosphoserine. The interval 229–251 (RAADQNGGGGRHNWGQGFRLGDQ) is disordered. Residues 241-248 (NWGQGFRL) carry the SHP-box motif.

This sequence belongs to the derlin family. As to quaternary structure, homotetramer. The four subunits of the tetramer are arranged in a twofold symmetry. Forms homo- and heterooligomers with DERL2 and DERL3; binding to DERL3 is poorer than that between DERL2 and DERL3. Interacts (via SHP-box motif) with VCP. Interacts with AMFR, SELENOS, SEL1L, SELENOK and SYVN1, as well as with SEL1L-SYVN1 and VCP-SELENOS protein complexes; this interaction is weaker than that observed between DERL2 and these complexes. Interacts with NGLY1 and YOD1. Does not bind to EDEM1. Interacts with DNAJB9. Interacts with RNF103. Interacts with HM13. Interacts with XBP1 isoform 1 (via luminal/ectodomain domain); the interaction obviates the need for ectodomain shedding prior HM13/SPP-mediated XBP1 isoform 1 cleavage. Interacts with the signal recognition particle/SRP and the SRP receptor; in the process of endoplasmic reticulum stress-induced pre-emptive quality control. May interact with UBXN6. Interacts with ZFAND2B; probably through VCP. Interacts with CCDC47. Interacts with C18orf32. May interact with TRAM1. Forms a complex with SVIP and VCP/p97.

Its subcellular location is the endoplasmic reticulum membrane. Functionally, functional component of endoplasmic reticulum-associated degradation (ERAD) for misfolded lumenal proteins. Forms homotetramers which encircle a large channel traversing the endoplasmic reticulum (ER) membrane. This allows the retrotranslocation of misfolded proteins from the ER into the cytosol where they are ubiquitinated and degraded by the proteasome. The channel has a lateral gate within the membrane which provides direct access to membrane proteins with no need to reenter the ER lumen first. May mediate the interaction between VCP and the misfolded protein. Also involved in endoplasmic reticulum stress-induced pre-emptive quality control, a mechanism that selectively attenuates the translocation of newly synthesized proteins into the endoplasmic reticulum and reroutes them to the cytosol for proteasomal degradation. By controlling the steady-state expression of the IGF1R receptor, indirectly regulates the insulin-like growth factor receptor signaling pathway. The chain is Derlin-1 from Pongo abelii (Sumatran orangutan).